The chain runs to 329 residues: Phenylalanine--tRNA ligase alpha subunit (329 aa).

Glu-254 is a binding site for Mg(2+).

It belongs to the class-II aminoacyl-tRNA synthetase family. Phe-tRNA synthetase alpha subunit type 1 subfamily. In terms of assembly, tetramer of two alpha and two beta subunits. The cofactor is Mg(2+).

It is found in the cytoplasm. It catalyses the reaction tRNA(Phe) + L-phenylalanine + ATP = L-phenylalanyl-tRNA(Phe) + AMP + diphosphate + H(+). The chain is Phenylalanine--tRNA ligase alpha subunit from Haemophilus influenzae (strain PittEE).